Consider the following 313-residue polypeptide: Porphobilinogen deaminase (313 aa).

Cysteine 242 carries the S-(dipyrrolylmethanemethyl)cysteine modification.

Belongs to the HMBS family. As to quaternary structure, monomer. It depends on dipyrromethane as a cofactor.

The enzyme catalyses 4 porphobilinogen + H2O = hydroxymethylbilane + 4 NH4(+). It participates in porphyrin-containing compound metabolism; protoporphyrin-IX biosynthesis; coproporphyrinogen-III from 5-aminolevulinate: step 2/4. Functionally, tetrapolymerization of the monopyrrole PBG into the hydroxymethylbilane pre-uroporphyrinogen in several discrete steps. The chain is Porphobilinogen deaminase from Escherichia coli O17:K52:H18 (strain UMN026 / ExPEC).